The primary structure comprises 396 residues: Probable peptidoglycan glycosyltransferase FtsW (396 aa).

9 consecutive transmembrane segments (helical) span residues 17-37 (FCDG…WVMV), 61-81 (VFVL…MAWW), 83-103 (ANGP…LVAG), 117-137 (GIPL…VYLA), 159-179 (MVMA…AVVV), 198-218 (FLLL…AEPY), 274-294 (FVFA…VIGL), 316-336 (FAAY…FINI), and 350-370 (LPLL…VGML).

This sequence belongs to the SEDS family. FtsW subfamily.

It is found in the cell inner membrane. The enzyme catalyses [GlcNAc-(1-&gt;4)-Mur2Ac(oyl-L-Ala-gamma-D-Glu-L-Lys-D-Ala-D-Ala)](n)-di-trans,octa-cis-undecaprenyl diphosphate + beta-D-GlcNAc-(1-&gt;4)-Mur2Ac(oyl-L-Ala-gamma-D-Glu-L-Lys-D-Ala-D-Ala)-di-trans,octa-cis-undecaprenyl diphosphate = [GlcNAc-(1-&gt;4)-Mur2Ac(oyl-L-Ala-gamma-D-Glu-L-Lys-D-Ala-D-Ala)](n+1)-di-trans,octa-cis-undecaprenyl diphosphate + di-trans,octa-cis-undecaprenyl diphosphate + H(+). Its pathway is cell wall biogenesis; peptidoglycan biosynthesis. Peptidoglycan polymerase that is essential for cell division. The polypeptide is Probable peptidoglycan glycosyltransferase FtsW (Halomonas elongata (strain ATCC 33173 / DSM 2581 / NBRC 15536 / NCIMB 2198 / 1H9)).